Here is an 87-residue protein sequence, read N- to C-terminus: Scorpine-like peptide Tco 41.46-2 (87 aa).

The signal sequence occupies residues 1–19; sequence MERKLALLLFLGMVTLASC. A BetaSPN-type CS-alpha/beta domain is found at 53-87; that stretch reads QFGCPAYEGYCNNHCQDIERKDGECHGFKCKCAKD. 3 disulfides stabilise this stretch: C56–C77, C63–C82, and C67–C84.

Belongs to the long chain scorpion toxin family. Class 1 subfamily. As to expression, expressed by the venom gland.

It is found in the secreted. May have antibacterial activity. In terms of biological role, inhibits voltage-gated potassium channel. Its function is as follows. Does not induce hemolytic activity, lactate dehydrogenase (LDH) release from mast cells, mast cell degranulation, and antimicrobial effects. In vivo, injection into mice causes moderate edema formation, but induces very weak or no change in nociceptive sensibility. It also reduces mice locomotion, suggesting an increase in anxiety, but causes no alteration in rearing (standing on hind limbs). The protein is Scorpine-like peptide Tco 41.46-2 of Tityus costatus (Brazilian scorpion).